The sequence spans 823 residues: Transcription factor SPT20 homolog-like 1 (823 aa).

Disordered regions lie at residues 246–273 (SVKP…KEER), 369–524 (PRKK…AAQP), 560–601 (GSSF…AVQA), 631–669 (VLTG…LGLS), and 720–757 (LRQQ…PQHI). The span at 423 to 440 (SHSSSGPASVSQLSSWKT) shows a compositional bias: polar residues. Low complexity-rich tracts occupy residues 469–509 (SSSG…QKPS), 568–582 (APGS…ISGS), and 636–650 (QQQS…QLQQ).

The protein belongs to the SPT20 family.

The chain is Transcription factor SPT20 homolog-like 1 (SUPT20HL1) from Homo sapiens (Human).